The primary structure comprises 85 residues: Conotoxin Cap15b (85 aa).

The signal sequence occupies residues 1–23; sequence MEKLTFLILVATVLLTIHVLVQS. Positions 24–49 are excised as a propeptide; the sequence is DGDKHLKRRPKQYATKRLSALMRGHR. A Pyrrolidone carboxylic acid modification is found at glutamine 50.

The protein belongs to the conotoxin O2 superfamily. Contains 4 disulfide bonds. Expressed by the venom duct.

It localises to the secreted. The sequence is that of Conotoxin Cap15b from Conus capitaneus (Captain cone).